Here is a 98-residue protein sequence, read N- to C-terminus: Integration host factor subunit alpha (98 aa).

Residues F49–I71 form a disordered region.

It belongs to the bacterial histone-like protein family. As to quaternary structure, heterodimer of an alpha and a beta chain.

Its function is as follows. This protein is one of the two subunits of integration host factor, a specific DNA-binding protein that functions in genetic recombination as well as in transcriptional and translational control. This Shewanella amazonensis (strain ATCC BAA-1098 / SB2B) protein is Integration host factor subunit alpha.